The primary structure comprises 102 residues: Probable endoribonuclease MazF2 (102 aa).

This sequence belongs to the PemK/MazF family. In terms of assembly, forms a complex with cognate antitoxin MazE2.

Functionally, toxic component of a type II toxin-antitoxin (TA) system. Acts as an endoribonuclease. Neutralized by coexpression with cognate antitoxin MazE2. In Mycobacterium tuberculosis (strain CDC 1551 / Oshkosh), this protein is Probable endoribonuclease MazF2 (mazF2).